We begin with the raw amino-acid sequence, 337 residues long: UDP-3-O-acylglucosamine N-acyltransferase (337 aa).

Residue histidine 238 is the Proton acceptor of the active site.

Belongs to the transferase hexapeptide repeat family. LpxD subfamily. As to quaternary structure, homotrimer.

It catalyses the reaction a UDP-3-O-[(3R)-3-hydroxyacyl]-alpha-D-glucosamine + a (3R)-hydroxyacyl-[ACP] = a UDP-2-N,3-O-bis[(3R)-3-hydroxyacyl]-alpha-D-glucosamine + holo-[ACP] + H(+). The protein operates within bacterial outer membrane biogenesis; LPS lipid A biosynthesis. In terms of biological role, catalyzes the N-acylation of UDP-3-O-acylglucosamine using 3-hydroxyacyl-ACP as the acyl donor. Is involved in the biosynthesis of lipid A, a phosphorylated glycolipid that anchors the lipopolysaccharide to the outer membrane of the cell. This Xanthomonas oryzae pv. oryzae (strain KACC10331 / KXO85) protein is UDP-3-O-acylglucosamine N-acyltransferase.